The following is a 434-amino-acid chain: Enolase (434 aa).

2 residues coordinate substrate: His158 and Glu167. Glu210 functions as the Proton donor in the catalytic mechanism. Residues Asp245, Glu294, and Asp319 each contribute to the Mg(2+) site. Residues Glu294 and Asp319 each contribute to the substrate site. Residue Lys344 is the Proton acceptor of the active site. Residues 371 to 374 (SHRS) and Lys395 contribute to the substrate site.

This sequence belongs to the enolase family. In terms of assembly, homodimer. It depends on Mg(2+) as a cofactor.

Its subcellular location is the cytoplasm. The enzyme catalyses (2R)-2-phosphoglycerate = phosphoenolpyruvate + H2O. Its pathway is carbohydrate degradation; glycolysis; pyruvate from D-glyceraldehyde 3-phosphate: step 4/5. The chain is Enolase (ENO) from Schistosoma mansoni (Blood fluke).